The sequence spans 884 residues: Exocyst complex component 2 (884 aa).

A compositionally biased stretch (basic and acidic residues) spans 1 to 11 (MEENAQARERL). Positions 1–27 (MEENAQARERLPPTVTGLSPTEGVPGT) are disordered. One can recognise an IPT/TIG domain in the interval 13–98 (PTVTGLSPTE…GSSNVKFRVF (86 aa)). Coiled coils occupy residues 178-206 (ADAT…SEEM) and 846-874 (NQRL…AENL).

This sequence belongs to the SEC5 family. The exocyst complex is composed of sec-3/exoc1, sec-5/exoc2, sec-6/exoc3, sec-8/exoc4, sec-10/exoc5, sec-15/exoc6, exo-70/exoc7 and exo-84/exoc8.

In terms of biological role, component of the exocyst complex involved in the docking of exocytic vesicles with fusion sites on the plasma membrane. The polypeptide is Exocyst complex component 2 (sec-5) (Caenorhabditis elegans).